We begin with the raw amino-acid sequence, 946 residues long: RIPOR family member 3 (946 aa).

A phosphoserine mark is found at Ser-9, Ser-24, and Ser-340. Position 345 is a phosphothreonine (Thr-345). A phosphoserine mark is found at Ser-351 and Ser-384. The interval 390-512 (GPSLRSQSQE…GDREDGPGVA (123 aa)) is disordered. Over residues 437–446 (SIEEEAREDP) the composition is skewed to basic and acidic residues. Polar residues predominate over residues 478 to 495 (SLPQGSLFHSGTASSSQN). A compositionally biased stretch (basic and acidic residues) spans 496-508 (GHEEGATGDREDG).

The protein belongs to the RIPOR family.

The polypeptide is RIPOR family member 3 (Homo sapiens (Human)).